Here is a 593-residue protein sequence, read N- to C-terminus: Aspartate--tRNA ligase (593 aa).

Residue Glu-180 coordinates L-aspartate. The interval 204–207 (QLFK) is aspartate. An L-aspartate-binding site is contributed by Arg-226. ATP contacts are provided by residues 226-228 (RDE) and Gln-235. His-454 is a binding site for L-aspartate. ATP is bound at residue Glu-488. Arg-495 lines the L-aspartate pocket. Position 540–543 (540–543 (GFDR)) interacts with ATP.

Belongs to the class-II aminoacyl-tRNA synthetase family. Type 1 subfamily. Homodimer.

The protein localises to the cytoplasm. It carries out the reaction tRNA(Asp) + L-aspartate + ATP = L-aspartyl-tRNA(Asp) + AMP + diphosphate. Functionally, catalyzes the attachment of L-aspartate to tRNA(Asp) in a two-step reaction: L-aspartate is first activated by ATP to form Asp-AMP and then transferred to the acceptor end of tRNA(Asp). This is Aspartate--tRNA ligase from Clostridium novyi (strain NT).